The sequence spans 91 residues: DNA-directed RNA polymerase subunit omega (91 aa).

This sequence belongs to the RNA polymerase subunit omega family. As to quaternary structure, the RNAP catalytic core consists of 2 alpha, 1 beta, 1 beta' and 1 omega subunit. When a sigma factor is associated with the core the holoenzyme is formed, which can initiate transcription.

It carries out the reaction RNA(n) + a ribonucleoside 5'-triphosphate = RNA(n+1) + diphosphate. Functionally, promotes RNA polymerase assembly. Latches the N- and C-terminal regions of the beta' subunit thereby facilitating its interaction with the beta and alpha subunits. This chain is DNA-directed RNA polymerase subunit omega, found in Sodalis glossinidius (strain morsitans).